The chain runs to 257 residues: Thioredoxin-dependent peroxide reductase, mitochondrial (257 aa).

A mitochondrion-targeting transit peptide spans 1 to 62 (MAAAAGRLLW…FAFSTSSSFH (62 aa)). Residues 64 to 222 (PAVTQHAPHF…PLRLVKAFQF (159 aa)) form the Thioredoxin domain. K84 is subject to N6-succinyllysine. K92 bears the N6-acetyllysine; alternate mark. N6-succinyllysine; alternate is present on K92. The active-site Cysteine sulfenic acid (-SOH) intermediate is the C109. At T147 the chain carries Phosphothreonine.

It belongs to the peroxiredoxin family. AhpC/Prx1 subfamily. As to quaternary structure, homodimer; disulfide-linked, upon oxidation. 6 homodimers assemble to form a ring-like dodecamer. Interacts with NEK6. Interacts with LRRK2. Interacts with MAP3K13. Interacts with RPS6KC1 (via PX domain). In terms of processing, phosphorylated by LRRK2; phosphorylation reduces perodixase activity. Post-translationally, the enzyme can be inactivated by further oxidation of the cysteine sulfenic acid (C(P)-SOH) to sulphinic acid (C(P)-SO2H) and sulphonic acid (C(P)-SO3H) instead of its condensation to a disulfide bond. S-palmitoylated. As to expression, ubiquitous.

It is found in the mitochondrion. The protein localises to the cytoplasm. The protein resides in the early endosome. The enzyme catalyses a hydroperoxide + [thioredoxin]-dithiol = an alcohol + [thioredoxin]-disulfide + H2O. Functionally, thiol-specific peroxidase that catalyzes the reduction of hydrogen peroxide and organic hydroperoxides to water and alcohols, respectively. Plays a role in cell protection against oxidative stress by detoxifying peroxides. Acts synergistically with MAP3K13 to regulate the activation of NF-kappa-B in the cytosol. Required for the maintenance of physical strength. This Rattus norvegicus (Rat) protein is Thioredoxin-dependent peroxide reductase, mitochondrial (Prdx3).